The sequence spans 426 residues: Glutamyl-tRNA reductase (426 aa).

Residues 52 to 55, Ser110, 115 to 117, and Gln121 each bind substrate; these read TCNR and EYE. Cys53 functions as the Nucleophile in the catalytic mechanism. Residue 190–195 participates in NADP(+) binding; it reads GAGEMA.

It belongs to the glutamyl-tRNA reductase family. Homodimer.

The catalysed reaction is (S)-4-amino-5-oxopentanoate + tRNA(Glu) + NADP(+) = L-glutamyl-tRNA(Glu) + NADPH + H(+). The protein operates within porphyrin-containing compound metabolism; protoporphyrin-IX biosynthesis; 5-aminolevulinate from L-glutamyl-tRNA(Glu): step 1/2. Its function is as follows. Catalyzes the NADPH-dependent reduction of glutamyl-tRNA(Glu) to glutamate 1-semialdehyde (GSA). In Saccharolobus solfataricus (strain ATCC 35092 / DSM 1617 / JCM 11322 / P2) (Sulfolobus solfataricus), this protein is Glutamyl-tRNA reductase.